Reading from the N-terminus, the 502-residue chain is uncharacterized protein (502 aa).

The chain crosses the membrane as a helical span at residues methionine 1–tyrosine 21. PLD phosphodiesterase domains are found at residues isoleucine 162–tyrosine 189 and threonine 396–serine 423.

It belongs to the phospholipase D family. Cardiolipin synthase subfamily.

Its subcellular location is the cell membrane. This is an uncharacterized protein from Helicobacter pylori (strain ATCC 700392 / 26695) (Campylobacter pylori).